Reading from the N-terminus, the 1769-residue chain is Gamma-tubulin complex component 6 (1769 aa).

Disordered regions lie at residues Glu809–Asp842, Ser859–Thr881, and Thr1284–Arg1360. A compositionally biased stretch (polar residues) spans Phe820 to Gly831. Residues Pro1314–Glu1326 show a composition bias toward basic and acidic residues. The span at Leu1332–Pro1343 shows a compositional bias: polar residues.

The protein belongs to the TUBGCP family. In terms of assembly, component of the gamma-tubulin ring complex (gTuRC) consisting of TUBGCP2, TUBGCP3, TUBGCP4, TUBGCP5 and TUBGCP6 and gamma-tubulin TUBG1 or TUBG2. TUBGCP2, TUBGCP3, TUBGCP4, TUBGCP5 and TUBGCP6 assemble in a 5:5:2:1:1 stoichiometry; each is associated with a gamma-tubulin, thereby arranging 14 gamma-tubulins in a helical manner. Gamma-tubulin at the first position is blocked by TUBGCP3 at the last position, allowing 13 protafilaments to grow into a microtubule. The gTuRC (via TUBGCP3 and TUBGCP6) interacts with ACTB and MZT1; the interactions form a luminal bridge that stabilizes the initial structure during complex assembly. The gTuRC (via TUBGCP2) interacts with MZT2A/MZT2B and CDK5RAP2 (via CM1 motif); the interactions play a role in gTuRC activation.

The protein resides in the cytoplasm. It is found in the cytoskeleton. It localises to the microtubule organizing center. Its subcellular location is the centrosome. In terms of biological role, component of the gamma-tubulin ring complex (gTuRC) which mediates microtubule nucleation. The gTuRC regulates the minus-end nucleation of alpha-beta tubulin heterodimers that grow into microtubule protafilaments, a critical step in centrosome duplication and spindle formation. The chain is Gamma-tubulin complex component 6 (Tubgcp6) from Mus musculus (Mouse).